The sequence spans 278 residues: Urease accessory protein UreD (278 aa).

Belongs to the UreD family. In terms of assembly, ureD, UreF and UreG form a complex that acts as a GTP-hydrolysis-dependent molecular chaperone, activating the urease apoprotein by helping to assemble the nickel containing metallocenter of UreC. The UreE protein probably delivers the nickel.

The protein resides in the cytoplasm. In terms of biological role, required for maturation of urease via the functional incorporation of the urease nickel metallocenter. The chain is Urease accessory protein UreD from Deinococcus radiodurans (strain ATCC 13939 / DSM 20539 / JCM 16871 / CCUG 27074 / LMG 4051 / NBRC 15346 / NCIMB 9279 / VKM B-1422 / R1).